The chain runs to 68 residues: MTKATDIRTKTPDELNDMLLELKREQLNLRFQRATGQQENTSQIRKARRDVARVKTIQAERARAAAKA.

Belongs to the universal ribosomal protein uL29 family.

The sequence is that of Large ribosomal subunit protein uL29 from Acidiphilium cryptum (strain JF-5).